The sequence spans 136 residues: Transcription antitermination protein NusB (136 aa).

This sequence belongs to the NusB family.

Involved in transcription antitermination. Required for transcription of ribosomal RNA (rRNA) genes. Binds specifically to the boxA antiterminator sequence of the ribosomal RNA (rrn) operons. In Kineococcus radiotolerans (strain ATCC BAA-149 / DSM 14245 / SRS30216), this protein is Transcription antitermination protein NusB.